A 402-amino-acid chain; its full sequence is uncharacterized protein (402 aa).

To M.genitalium MG148.

This is an uncharacterized protein from Caldicellulosiruptor sp. (strain Rt8B.4).